We begin with the raw amino-acid sequence, 115 residues long: Glutaredoxin 4 (115 aa).

In terms of domain architecture, Glutaredoxin spans 5-107 (IEKIQRQIAE…QLIKETAAKY (103 aa)). Lysine 22 contributes to the glutathione binding site. Cysteine 30 contributes to the [2Fe-2S] cluster binding site. Glutathione-binding positions include arginine 59, phenylalanine 71, and 84–85 (CD).

Belongs to the glutaredoxin family. Monothiol subfamily. Homodimer.

The protein localises to the cytoplasm. In terms of biological role, monothiol glutaredoxin involved in the biogenesis of iron-sulfur clusters. In Shigella flexneri, this protein is Glutaredoxin 4 (grxD).